The sequence spans 266 residues: DNA-directed RNA polymerase subunit Rpo3 (266 aa).

[3Fe-4S] cluster contacts are provided by Cys-205, Cys-208, and Cys-211.

Belongs to the archaeal Rpo3/eukaryotic RPB3 RNA polymerase subunit family. Part of the RNA polymerase complex. [3Fe-4S] cluster is required as a cofactor.

The protein localises to the cytoplasm. It carries out the reaction RNA(n) + a ribonucleoside 5'-triphosphate = RNA(n+1) + diphosphate. In terms of biological role, DNA-dependent RNA polymerase (RNAP) catalyzes the transcription of DNA into RNA using the four ribonucleoside triphosphates as substrates. This is DNA-directed RNA polymerase subunit Rpo3 from Methanosarcina acetivorans (strain ATCC 35395 / DSM 2834 / JCM 12185 / C2A).